The sequence spans 154 residues: MYTKAIYPGTFDPVTNGHLDIIKRACKMFDKIIVAVADNKDKKTMFSLEKRVELMKKATSHLPKIEVESFNSLLVDFAREKECKIIIRGLRAVSDFEYELQMGYANKSLDSEIDTIYLMPNLENAFISSSVVRSILKYNGDVSHLIPNEIIKDL.

Position 10 (T10) interacts with substrate. ATP-binding positions include 10 to 11 (TF) and H18. K42, L74, and R88 together coordinate substrate. ATP-binding positions include 89-91 (GLR), E99, and 124-130 (NAFISSS).

The protein belongs to the bacterial CoaD family. In terms of assembly, homohexamer. Requires Mg(2+) as cofactor.

Its subcellular location is the cytoplasm. The catalysed reaction is (R)-4'-phosphopantetheine + ATP + H(+) = 3'-dephospho-CoA + diphosphate. It functions in the pathway cofactor biosynthesis; coenzyme A biosynthesis; CoA from (R)-pantothenate: step 4/5. Reversibly transfers an adenylyl group from ATP to 4'-phosphopantetheine, yielding dephospho-CoA (dPCoA) and pyrophosphate. The protein is Phosphopantetheine adenylyltransferase of Nautilia profundicola (strain ATCC BAA-1463 / DSM 18972 / AmH).